The following is a 263-amino-acid chain: Protein STK_14130 (263 aa).

It belongs to the CinA family.

This is Protein STK_14130 from Sulfurisphaera tokodaii (strain DSM 16993 / JCM 10545 / NBRC 100140 / 7) (Sulfolobus tokodaii).